Here is a 161-residue protein sequence, read N- to C-terminus: Ribosome maturation factor RimP (161 aa).

It belongs to the RimP family.

It localises to the cytoplasm. Functionally, required for maturation of 30S ribosomal subunits. This Rickettsia africae (strain ESF-5) protein is Ribosome maturation factor RimP.